The following is a 147-amino-acid chain: Hemoglobin subunit beta (147 aa).

At valine 2 the chain carries N-acetylvaline. The Globin domain occupies 3-147; it reads HLSAEEKGHI…VATALAHKYH (145 aa). Lysine 60 bears the N6-acetyllysine mark. Residue histidine 64 participates in heme b binding. Lysine 83 carries the N6-acetyllysine modification. A heme b-binding site is contributed by histidine 93. At cysteine 94 the chain carries S-nitrosocysteine. Lysine 145 carries the N6-acetyllysine modification.

Belongs to the globin family. In terms of assembly, heterotetramer of two alpha chains and two beta chains. In terms of tissue distribution, red blood cells.

Involved in oxygen transport from the lung to the various peripheral tissues. This chain is Hemoglobin subunit beta (HBB), found in Sminthopsis crassicaudata (Fat-tailed dunnart).